We begin with the raw amino-acid sequence, 110 residues long: Nucleoid-associated protein PERMA_0533 (110 aa).

This sequence belongs to the YbaB/EbfC family. In terms of assembly, homodimer.

The protein localises to the cytoplasm. It localises to the nucleoid. Its function is as follows. Binds to DNA and alters its conformation. May be involved in regulation of gene expression, nucleoid organization and DNA protection. This chain is Nucleoid-associated protein PERMA_0533, found in Persephonella marina (strain DSM 14350 / EX-H1).